Here is a 394-residue protein sequence, read N- to C-terminus: Elongation factor Tu (394 aa).

One can recognise a tr-type G domain in the interval 10–204 (KPHVNVGTIG…ALDTYIPEPE (195 aa)). Residues 19–26 (GHVDHGKT) form a G1 region. A GTP-binding site is contributed by 19-26 (GHVDHGKT). T26 contributes to the Mg(2+) binding site. The segment at 60-64 (GITIN) is G2. Residues 81-84 (DCPG) are G3. Residues 81 to 85 (DCPGH) and 136 to 139 (NKCD) each bind GTP. The G4 stretch occupies residues 136-139 (NKCD). A G5 region spans residues 174-176 (SAL).

Belongs to the TRAFAC class translation factor GTPase superfamily. Classic translation factor GTPase family. EF-Tu/EF-1A subfamily. In terms of assembly, monomer.

It is found in the cytoplasm. It catalyses the reaction GTP + H2O = GDP + phosphate + H(+). GTP hydrolase that promotes the GTP-dependent binding of aminoacyl-tRNA to the A-site of ribosomes during protein biosynthesis. This Vibrio cholerae serotype O1 (strain ATCC 39541 / Classical Ogawa 395 / O395) protein is Elongation factor Tu.